A 560-amino-acid polypeptide reads, in one-letter code: Formate--tetrahydrofolate ligase (560 aa).

ATP is bound at residue 69 to 76 (TPAGEGKS).

This sequence belongs to the formate--tetrahydrofolate ligase family.

It catalyses the reaction (6S)-5,6,7,8-tetrahydrofolate + formate + ATP = (6R)-10-formyltetrahydrofolate + ADP + phosphate. The protein operates within one-carbon metabolism; tetrahydrofolate interconversion. This Listeria monocytogenes serotype 4b (strain CLIP80459) protein is Formate--tetrahydrofolate ligase.